The following is a 301-amino-acid chain: TLR adapter interacting with SLC15A4 on the lysosome (301 aa).

The pLxIS motif signature appears at 290–294 (SLHIS). S294 carries the post-translational modification Phosphoserine.

In terms of assembly, interacts (via pLxIS motif) with IRF5; leading to IRF5 activation. Interacts with SLC15A4; leading to its recruitment to endolysosome. In terms of processing, the phosphorylated pLxIS motif constitutes an IRF5-binding motif, leading to recruitment of the transcription factor IRF5 to induce type-I interferons and other cytokines. In terms of tissue distribution, highly expressed in immune cell types such as B-cells, neutrophils, dendritic cells and monocytes, the expression levels are two-three-fold higher in female cells compared to male cells (at protein level). Expressed at low levels in T-cells and NK cells.

It localises to the lysosome membrane. Its subcellular location is the endosome membrane. The protein resides in the nucleus. The protein localises to the cytoplasm. In terms of biological role, innate immune adapter that mediates the recruitment and activation of IRF5 downstream of endolysosomal toll-like receptors TLR7, TLR8 and TLR9. Following recruitment to endolysosome by SLC15A4 downstream of TLR7, TLR8 and TLR9, specifically recruits IRF5 transcription factor via its pLxIS motif, leading to IRF5 activation and subsequent expression of type I interferons. Plays a role in the regulation of endolysosomal pH in immune cells such as B-cells, dendritic cells and monocytes. In Homo sapiens (Human), this protein is TLR adapter interacting with SLC15A4 on the lysosome.